We begin with the raw amino-acid sequence, 541 residues long: Chaperonin GroEL (541 aa).

Residues 29–32 (TLGP), 86–90 (DGTTT), G413, and D494 contribute to the ATP site.

The protein belongs to the chaperonin (HSP60) family. In terms of assembly, forms a cylinder of 14 subunits composed of two heptameric rings stacked back-to-back. Interacts with the co-chaperonin GroES.

It localises to the cytoplasm. The enzyme catalyses ATP + H2O + a folded polypeptide = ADP + phosphate + an unfolded polypeptide.. In terms of biological role, together with its co-chaperonin GroES, plays an essential role in assisting protein folding. The GroEL-GroES system forms a nano-cage that allows encapsulation of the non-native substrate proteins and provides a physical environment optimized to promote and accelerate protein folding. The chain is Chaperonin GroEL from Acetivibrio thermocellus (strain ATCC 27405 / DSM 1237 / JCM 9322 / NBRC 103400 / NCIMB 10682 / NRRL B-4536 / VPI 7372) (Clostridium thermocellum).